The primary structure comprises 336 residues: Phosphonate dehydrogenase (336 aa).

NAD(+) contacts are provided by residues 155 to 156 (AI), Glu175, 235 to 237 (PCR), and Asp261. The active site involves Arg237. The active site involves Glu266. His292 (proton donor) is an active-site residue. 292–295 (HIGS) provides a ligand contact to NAD(+).

As to quaternary structure, homodimer.

The catalysed reaction is phosphonate + NAD(+) + H2O = phosphate + NADH + H(+). Inhibited by NaCl, NADH and sulfite. Catalyzes phosphite (phosphonate) oxidation. This chain is Phosphonate dehydrogenase (ptxD), found in Stutzerimonas stutzeri (Pseudomonas stutzeri).